A 563-amino-acid polypeptide reads, in one-letter code: uncharacterized protein (563 aa).

The protein belongs to the HyuB family.

This is an uncharacterized protein from Methanocaldococcus jannaschii (strain ATCC 43067 / DSM 2661 / JAL-1 / JCM 10045 / NBRC 100440) (Methanococcus jannaschii).